Reading from the N-terminus, the 698-residue chain is Polyribonucleotide nucleotidyltransferase (698 aa).

2 residues coordinate Mg(2+): D486 and D492. The 60-residue stretch at 553–612 (PRIIVRNIPKDRIGELIGPGGKNVRGISELTGAELYIEDDGKVTISGSNQESAEKAAKMV) folds into the KH domain. The S1 motif domain maps to 622–690 (GKIYEGKVKR…KTGKIDLSRK (69 aa)).

It belongs to the polyribonucleotide nucleotidyltransferase family. Mg(2+) serves as cofactor.

Its subcellular location is the cytoplasm. It carries out the reaction RNA(n+1) + phosphate = RNA(n) + a ribonucleoside 5'-diphosphate. Its function is as follows. Involved in mRNA degradation. Catalyzes the phosphorolysis of single-stranded polyribonucleotides processively in the 3'- to 5'-direction. The polypeptide is Polyribonucleotide nucleotidyltransferase (Leptospira interrogans serogroup Icterohaemorrhagiae serovar copenhageni (strain Fiocruz L1-130)).